The chain runs to 572 residues: Proline--tRNA ligase (572 aa).

The protein belongs to the class-II aminoacyl-tRNA synthetase family. ProS type 1 subfamily. Homodimer.

It is found in the cytoplasm. It carries out the reaction tRNA(Pro) + L-proline + ATP = L-prolyl-tRNA(Pro) + AMP + diphosphate. Catalyzes the attachment of proline to tRNA(Pro) in a two-step reaction: proline is first activated by ATP to form Pro-AMP and then transferred to the acceptor end of tRNA(Pro). As ProRS can inadvertently accommodate and process non-cognate amino acids such as alanine and cysteine, to avoid such errors it has two additional distinct editing activities against alanine. One activity is designated as 'pretransfer' editing and involves the tRNA(Pro)-independent hydrolysis of activated Ala-AMP. The other activity is designated 'posttransfer' editing and involves deacylation of mischarged Ala-tRNA(Pro). The misacylated Cys-tRNA(Pro) is not edited by ProRS. The protein is Proline--tRNA ligase of Klebsiella pneumoniae subsp. pneumoniae (strain ATCC 700721 / MGH 78578).